The sequence spans 468 residues: MKFTALPFEVGPVHFVGIGGIGMSGIAEVMLNLGYKVQGSDIKANPNVERLTGLGATVAIGHKAANVDGAGAIVVSSAIKPDNPELVAARAAKIPVVRRAEMLAELMRLKFAVAVGGTHGKTTTTSLVAVLMDAAGVDPTVINGGIISAYGSNAKVGLGDWMAVEADESDGSFLKLRSTVAIVTNIDPEHMEHYGTFDVLRQAFFQFVENLPFYGFAVLCTDHPEVQSLASRVEDRRVITYGQNPQADARLENLKMDPSGATFDVRFRLRGQDETVWRDIFLPMMGEHNVLNAVAALATARELGLTEAGAKTALGQFGGVKRRFTRTGEWKGAAIIDDYGHHPVEIAAVLKAARQAATGKVIAVMQPHRYSRLHDLFDDFSTCFNDADSVLVTPVYTAGEDPIEGADQAHLVESLRSHGHRDAGATTRDAVAADVAKRAGEGDVVVCLGAGDITLWAYALPGELEALG.

Gly-117 to Thr-123 lines the ATP pocket.

Belongs to the MurCDEF family.

It localises to the cytoplasm. The catalysed reaction is UDP-N-acetyl-alpha-D-muramate + L-alanine + ATP = UDP-N-acetyl-alpha-D-muramoyl-L-alanine + ADP + phosphate + H(+). The protein operates within cell wall biogenesis; peptidoglycan biosynthesis. In terms of biological role, cell wall formation. The chain is UDP-N-acetylmuramate--L-alanine ligase from Maricaulis maris (strain MCS10) (Caulobacter maris).